The primary structure comprises 217 residues: Pyridoxine/pyridoxamine 5'-phosphate oxidase (217 aa).

Substrate contacts are provided by residues 13 to 16 and Lys71; that span reads RRDY. FMN contacts are provided by residues 66-71, 81-82, Lys88, and Gln110; these read RIVLLK and YT. Substrate-binding residues include Tyr128, Arg132, and Ser136. FMN contacts are provided by residues 145 to 146 and Trp190; that span reads QS. Residue 196–198 coordinates substrate; the sequence is RLH. Arg200 serves as a coordination point for FMN.

Belongs to the pyridoxamine 5'-phosphate oxidase family. Homodimer. The cofactor is FMN.

The enzyme catalyses pyridoxamine 5'-phosphate + O2 + H2O = pyridoxal 5'-phosphate + H2O2 + NH4(+). The catalysed reaction is pyridoxine 5'-phosphate + O2 = pyridoxal 5'-phosphate + H2O2. It functions in the pathway cofactor metabolism; pyridoxal 5'-phosphate salvage; pyridoxal 5'-phosphate from pyridoxamine 5'-phosphate: step 1/1. The protein operates within cofactor metabolism; pyridoxal 5'-phosphate salvage; pyridoxal 5'-phosphate from pyridoxine 5'-phosphate: step 1/1. Its function is as follows. Catalyzes the oxidation of either pyridoxine 5'-phosphate (PNP) or pyridoxamine 5'-phosphate (PMP) into pyridoxal 5'-phosphate (PLP). This chain is Pyridoxine/pyridoxamine 5'-phosphate oxidase, found in Edwardsiella ictaluri (strain 93-146).